A 146-amino-acid chain; its full sequence is Large-conductance mechanosensitive channel (146 aa).

The next 2 membrane-spanning stretches (helical) occupy residues 12 to 32 (AFAM…GGAF) and 83 to 103 (GNFL…FLFI).

The protein belongs to the MscL family. In terms of assembly, homopentamer.

The protein localises to the cell inner membrane. Its function is as follows. Channel that opens in response to stretch forces in the membrane lipid bilayer. May participate in the regulation of osmotic pressure changes within the cell. The polypeptide is Large-conductance mechanosensitive channel (Phocaeicola vulgatus (strain ATCC 8482 / DSM 1447 / JCM 5826 / CCUG 4940 / NBRC 14291 / NCTC 11154) (Bacteroides vulgatus)).